The primary structure comprises 354 residues: Protein RecA (354 aa).

G67–T74 is a binding site for ATP.

The protein belongs to the RecA family.

It is found in the cytoplasm. In terms of biological role, can catalyze the hydrolysis of ATP in the presence of single-stranded DNA, the ATP-dependent uptake of single-stranded DNA by duplex DNA, and the ATP-dependent hybridization of homologous single-stranded DNAs. It interacts with LexA causing its activation and leading to its autocatalytic cleavage. This Haemophilus influenzae (strain 86-028NP) protein is Protein RecA.